The sequence spans 367 residues: Probable peptidoglycan glycosyltransferase FtsW (367 aa).

Residues 1-8 (MRRVEGYD) are Cytoplasmic-facing. A helical transmembrane segment spans residues 9–29 (MIVLMMAVILTCFGVVMVYSA). Topologically, residues 30–49 (SSVMAAKKFHDGFFFLKRQS) are periplasmic. A helical transmembrane segment spans residues 50–70 (LYALIGFIGMGVAMHVDYHVW). The Cytoplasmic segment spans residues 71 to 72 (KK). A helical transmembrane segment spans residues 73-93 (WAVPLFLGTFFLLLLVFVPGI). Topologically, residues 94–138 (GGTAKGASRWIRLPGFNFQPSELAKVALIMYMAYSLEKRQDKLKQ) are periplasmic. Residues 139–159 (FMSGFFPYMLILGVFIAVLLA) traverse the membrane as a helical segment. Topologically, residues 160–161 (QH) are cytoplasmic. Residues 162–182 (DMGAALTMLAVAIVMLFAAGT) form a helical membrane-spanning segment. Position 183 (K183) is a topological domain, periplasmic. The helical transmembrane segment at 184-204 (VQYILGMGLVALPGICYLVFT) threads the bilayer. Topologically, residues 205–225 (KAYRMRRITAFLDPWQDPTDA) are cytoplasmic. A helical membrane pass occupies residues 226–246 (GFQIIQSWLALGTGGFFGQGL). The Periplasmic segment spans residues 247-266 (GEGKQKLFYLPEAHTDFILS). The helical transmembrane segment at 267–287 (VLGEEMGFIGVVVIASMFLLL) threads the bilayer. The Cytoplasmic segment spans residues 288–304 (VQRSIRVAIAAEDSFGR). Residues 305-325 (FLAFGIAILLGLEAFVNMAVV) traverse the membrane as a helical segment. Residues 326–335 (TGLLPTKGIA) are Periplasmic-facing. The chain crosses the membrane as a helical span at residues 336–356 (LPFLSYGGSSLIISLCSVGVL). Residues 357–367 (LNVSTRMRGAA) are Cytoplasmic-facing.

This sequence belongs to the SEDS family. FtsW subfamily.

It localises to the cell inner membrane. It carries out the reaction [GlcNAc-(1-&gt;4)-Mur2Ac(oyl-L-Ala-gamma-D-Glu-L-Lys-D-Ala-D-Ala)](n)-di-trans,octa-cis-undecaprenyl diphosphate + beta-D-GlcNAc-(1-&gt;4)-Mur2Ac(oyl-L-Ala-gamma-D-Glu-L-Lys-D-Ala-D-Ala)-di-trans,octa-cis-undecaprenyl diphosphate = [GlcNAc-(1-&gt;4)-Mur2Ac(oyl-L-Ala-gamma-D-Glu-L-Lys-D-Ala-D-Ala)](n+1)-di-trans,octa-cis-undecaprenyl diphosphate + di-trans,octa-cis-undecaprenyl diphosphate + H(+). The protein operates within cell wall biogenesis; peptidoglycan biosynthesis. In terms of biological role, peptidoglycan polymerase that is essential for cell division. In Geobacter sp. (strain M18), this protein is Probable peptidoglycan glycosyltransferase FtsW.